The chain runs to 415 residues: Tyrosine--tRNA ligase (415 aa).

L-tyrosine is bound at residue Tyr-33. The 'HIGH' region motif lies at 38–47; sequence PSGESLHLGN. L-tyrosine is bound by residues Tyr-161 and Gln-165. Residues 225–229 carry the 'KMSKS' region motif; sequence KFGKS. Position 228 (Lys-228) interacts with ATP. The region spanning 350 to 414 is the S4 RNA-binding domain; the sequence is MVIDFLLQAK…KKNYFIVVWK (65 aa).

It belongs to the class-I aminoacyl-tRNA synthetase family. TyrS type 1 subfamily. In terms of assembly, homodimer.

The protein localises to the cytoplasm. The enzyme catalyses tRNA(Tyr) + L-tyrosine + ATP = L-tyrosyl-tRNA(Tyr) + AMP + diphosphate + H(+). In terms of biological role, catalyzes the attachment of tyrosine to tRNA(Tyr) in a two-step reaction: tyrosine is first activated by ATP to form Tyr-AMP and then transferred to the acceptor end of tRNA(Tyr). The protein is Tyrosine--tRNA ligase of Mycoplasmoides gallisepticum (strain R(low / passage 15 / clone 2)) (Mycoplasma gallisepticum).